The primary structure comprises 295 residues: Xyloglucan endotransglucosylase protein 2 (295 aa).

Positions 1–23 (MAMGTHFGGLWLALLCMVSATMG) are cleaved as a signal peptide. Residues 24-222 (AVPRKPVDVP…WSKAPFVASY (199 aa)) form the GH16 domain. Glu108 acts as the Nucleophile in catalysis. Glu112 serves as the catalytic Proton donor. Residue Glu112 coordinates xyloglucan. N-linked (GlcNAc...) asparagine glycosylation occurs at Asn116. Xyloglucan is bound by residues 125 to 127 (QTN), 135 to 137 (DRE), 201 to 202 (DW), and Gly206. Intrachain disulfides connect Cys230-Cys239 and Cys276-Cys289. Arg281 provides a ligand contact to xyloglucan.

It belongs to the glycosyl hydrolase 16 family. XTH group 1 subfamily. Contains at least one intrachain disulfide bond essential for its enzymatic activity. As to expression, expressed in fruit pulp.

It is found in the secreted. The protein localises to the cell wall. The protein resides in the extracellular space. It localises to the apoplast. The catalysed reaction is breaks a beta-(1-&gt;4) bond in the backbone of a xyloglucan and transfers the xyloglucanyl segment on to O-4 of the non-reducing terminal glucose residue of an acceptor, which can be a xyloglucan or an oligosaccharide of xyloglucan.. Its function is as follows. Catalyzes xyloglucan endotransglycosylation (XET). Cleaves and religates xyloglucan polymers. Does not catalyze xyloglucan endohydrolysis (XEH). Probably involved in cell wall restructuring during fruit ripening and postharvest fruit softening. The polypeptide is Xyloglucan endotransglucosylase protein 2 (Diospyros kaki (Kaki persimmon)).